A 529-amino-acid polypeptide reads, in one-letter code: Peptide chain release factor 3 (529 aa).

The tr-type G domain occupies 11–280; the sequence is NKRRTFAIIS…GLTEWAPKPQ (270 aa). GTP-binding positions include 20–27, 88–92, and 142–145; these read SHPDAGKT, DTPGH, and NKLD.

This sequence belongs to the TRAFAC class translation factor GTPase superfamily. Classic translation factor GTPase family. PrfC subfamily.

Its subcellular location is the cytoplasm. Functionally, increases the formation of ribosomal termination complexes and stimulates activities of RF-1 and RF-2. It binds guanine nucleotides and has strong preference for UGA stop codons. It may interact directly with the ribosome. The stimulation of RF-1 and RF-2 is significantly reduced by GTP and GDP, but not by GMP. This chain is Peptide chain release factor 3, found in Mannheimia succiniciproducens (strain KCTC 0769BP / MBEL55E).